The following is a 1148-amino-acid chain: Envelopment polyprotein (1148 aa).

A signal peptide spans 1–23 (MGELSPVCLYLLLQGLLLCNTGA). Residues 24-495 (ARNLNELKME…VPGLHGWATM (472 aa)) lie on the Lumenal side of the membrane. Disulfide bonds link Cys-34–Cys-159, Cys-68–Cys-165, Cys-117–Cys-136, Cys-141–Cys-146, Cys-183–Cys-193, and Cys-218–Cys-257. Residue Asn-142 is glycosylated (N-linked (GlcNAc...) asparagine; by host). Asn-357 carries N-linked (GlcNAc...) asparagine; by host glycosylation. Disulfide bonds link Cys-386–Cys-445, Cys-390–Cys-399, Cys-415–Cys-434, and Cys-462–Cys-485. N-linked (GlcNAc...) asparagine; by host glycosylation is present at Asn-409. The chain crosses the membrane as a helical span at residues 496–516 (LLLLTLCFGWVLIPTITMILL). Over 517-637 (KILIAFAYLC…LSLFRYRSRF (121 aa)) the chain is Cytoplasmic. The interval 526 to 543 (CSKYNTDSKFRILIEKVK) is binding to the ribonucleoprotein. 2 CCHC-type zinc fingers span residues 555–575 (CEVC…RKSC) and 580–601 (CPYC…FKVC). Binding to the ribonucleoprotein regions lie at residues 598–615 (FKVC…RKSL), 602–613 (KLTSRFQENLRK), and 621–635 (MQGC…RYRS). Residues 621-644 (MQGCYRTLSLFRYRSRFFVGLVWC) enclose the ITAM domain. A YxxL motif is present at residues 625–628 (YRTL). The chain crosses the membrane as a helical span at residues 638-658 (FVGLVWCVLLVLELIVWAASA). The Lumenal portion of the chain corresponds to 659–1114 (ETQNLNAGWT…EWILGVLNGN (456 aa)). 8 disulfides stabilise this stretch: Cys-745/Cys-780, Cys-749/Cys-787, Cys-761/Cys-894, Cys-775/Cys-905, Cys-790/Cys-913, Cys-816/Cys-825, Cys-833/Cys-842, and Cys-873/Cys-877. The tract at residues 767-787 (YEYETGWGCNPPDCPGVGTGC) is fusion loop. The N-linked (GlcNAc...) asparagine; by host glycan is linked to Asn-937. Cystine bridges form between Cys-979–Cys-1009, Cys-1002–Cys-1054, Cys-1019–Cys-1024, Cys-1055–Cys-1060, and Cys-1094–Cys-1098. Residues 1115 to 1135 (WMVVAVLVVLLILSILLFTLC) traverse the membrane as a helical segment. Binding to the ribonucleoprotein regions lie at residues 1131 to 1143 (LFTL…PSYR) and 1131 to 1148 (LFTL…EHKP). The Cytoplasmic segment spans residues 1136 to 1148 (CPRRPSYRKEHKP).

The protein belongs to the hantavirus envelope glycoprotein family. In terms of assembly, homodimer. Homotetramer; forms heterotetrameric Gn-Gc spikes in the pre-fusion conformation. Interacts (via C-terminus) with the nucleoprotein. Interacts with host TUFM; this interaction contributes to the virus-induced degradation of mitochondria by autophagy, which leads to degradation of host MAVS and inhibition of type I interferon (IFN) responses. Interacts with host MAP1LC3B; this interaction contributes to the virus-induced degradation of mitochondria by autophagy, which leads to degradation of host MAVS and inhibition of type I interferon (IFN) responses. Homodimer. Homotetramer; forms heterotetrameric Gn-Gc spikes in the pre-fusion conformation. Homotrimer; forms homotrimer in the post-fusion conformation at acidic pH. Interacts (via C-terminus) with the nucleoprotein. Envelope polyprotein precursor is quickly cleaved in vivo just after synthesis, presumably by host signal peptidase.

The protein resides in the virion membrane. It is found in the host cell surface. The protein localises to the host Golgi apparatus membrane. It localises to the host endoplasmic reticulum membrane. Its subcellular location is the host mitochondrion. Functionally, forms homotetramers with glycoprotein C at the surface of the virion. Attaches the virion to host cell receptors including integrin ITGAV/ITGB3. This attachment induces virion internalization predominantly through clathrin-dependent endocytosis. Mediates the assembly and budding of infectious virus particles through its interaction with the nucleocapsid protein and the viral genome. May dysregulate normal immune and endothelial cell responses through an ITAM motif. Translocates to mitochondria, binds to host TUFM and recruits MAP1LC3B. These interactions induce mitochondrial autophagy and therefore destruction of host MAVS leading to inhibition of type I interferon (IFN) responses. Concomitant breakdown of glycoprotein N is apparently prevented by the nucleoprotein that may inhibit Gn-stimulated autophagosome-lysosome fusion. Interacts with the viral genomic RNA. In terms of biological role, forms homotetramers with glycoprotein N at the surface of the virion. Attaches the virion to host cell receptors including integrin ITGAV/ITGB3. This attachment induces virion internalization predominantly through clathrin-dependent endocytosis. Class II fusion protein that promotes fusion of viral membrane with host endosomal membrane after endocytosis of the virion. The chain is Envelopment polyprotein (GP) from Puumala virus (strain K27).